Consider the following 851-residue polypeptide: Putative cell signaling protein (851 aa).

Basic and acidic residues-rich tracts occupy residues 165–176 (KLNEQDGKKSDN), 196–223 (DQAREQGSKAKDKIKNDPDAQKAKEETK), and 767–781 (SEERQRSTEDPLSHD). 2 disordered regions span residues 165 to 223 (KLNE…EETK) and 714 to 781 (DDSE…LSHD).

In terms of processing, palmitoylated.

The chain is Putative cell signaling protein from Schizosaccharomyces pombe (strain 972 / ATCC 24843) (Fission yeast).